Here is a 646-residue protein sequence, read N- to C-terminus: Elongation factor 4 (646 aa).

The 186-residue stretch at 42–227 (AQIRNFCIIA…EVVRRVPHPQ (186 aa)) folds into the tr-type G domain. Residues 54-59 (DHGKST) and 174-177 (NKID) contribute to the GTP site.

Belongs to the TRAFAC class translation factor GTPase superfamily. Classic translation factor GTPase family. LepA subfamily.

Its subcellular location is the cell membrane. It catalyses the reaction GTP + H2O = GDP + phosphate + H(+). In terms of biological role, required for accurate and efficient protein synthesis under certain stress conditions. May act as a fidelity factor of the translation reaction, by catalyzing a one-codon backward translocation of tRNAs on improperly translocated ribosomes. Back-translocation proceeds from a post-translocation (POST) complex to a pre-translocation (PRE) complex, thus giving elongation factor G a second chance to translocate the tRNAs correctly. Binds to ribosomes in a GTP-dependent manner. The protein is Elongation factor 4 of Mycobacterium leprae (strain Br4923).